The sequence spans 241 residues: 1-(5-phosphoribosyl)-5-[(5-phosphoribosylamino)methylideneamino] imidazole-4-carboxamide isomerase (241 aa).

The active-site Proton acceptor is Asp8. Asp130 acts as the Proton donor in catalysis.

Belongs to the HisA/HisF family.

Its subcellular location is the cytoplasm. It catalyses the reaction 1-(5-phospho-beta-D-ribosyl)-5-[(5-phospho-beta-D-ribosylamino)methylideneamino]imidazole-4-carboxamide = 5-[(5-phospho-1-deoxy-D-ribulos-1-ylimino)methylamino]-1-(5-phospho-beta-D-ribosyl)imidazole-4-carboxamide. It participates in amino-acid biosynthesis; L-histidine biosynthesis; L-histidine from 5-phospho-alpha-D-ribose 1-diphosphate: step 4/9. The chain is 1-(5-phosphoribosyl)-5-[(5-phosphoribosylamino)methylideneamino] imidazole-4-carboxamide isomerase from Francisella philomiragia subsp. philomiragia (strain ATCC 25017 / CCUG 19701 / FSC 153 / O#319-036).